A 157-amino-acid polypeptide reads, in one-letter code: Protein Smg homolog (157 aa).

It belongs to the Smg family.

This is Protein Smg homolog from Shewanella halifaxensis (strain HAW-EB4).